We begin with the raw amino-acid sequence, 298 residues long: Small ribosomal subunit protein uS3 (298 aa).

A KH type-2 domain is found at 38 to 106 (IRRRLSRGME…QVQLNILEVK (69 aa)). Residues 212 to 298 (KQKQQESEVR…EPRADEKTEG (87 aa)) are disordered. Positions 214 to 237 (KQQESEVRPPRGERGERGGRPERG) are enriched in basic and acidic residues. A compositionally biased stretch (polar residues) spans 265–278 (GSAQSPEQAQTSGD).

It belongs to the universal ribosomal protein uS3 family. Part of the 30S ribosomal subunit. Forms a tight complex with proteins S10 and S14.

In terms of biological role, binds the lower part of the 30S subunit head. Binds mRNA in the 70S ribosome, positioning it for translation. This Saccharopolyspora erythraea (strain ATCC 11635 / DSM 40517 / JCM 4748 / NBRC 13426 / NCIMB 8594 / NRRL 2338) protein is Small ribosomal subunit protein uS3.